The sequence spans 187 residues: UPF0340 protein SPP_0683 (187 aa).

The protein belongs to the UPF0340 family.

This is UPF0340 protein SPP_0683 from Streptococcus pneumoniae (strain P1031).